Reading from the N-terminus, the 301-residue chain is Probable actin-related protein 2/3 complex subunit 2 (301 aa).

It belongs to the ARPC2 family. In terms of assembly, component of the Arp2/3 complex, at least composed of arx-1, arx-2, arx-4 and arx-6.

The protein resides in the cytoplasm. The protein localises to the cytoskeleton. Its function is as follows. Functions as actin-binding component of the Arp2/3 complex which is involved in regulation of actin polymerization and together with an activating nucleation-promoting factor (NPF) mediates the formation of branched actin networks. Seems to contact the mother actin filament. Plays a role in time-dependent memory loss and the retention of conditioned behavior over time. The sequence is that of Probable actin-related protein 2/3 complex subunit 2 from Caenorhabditis elegans.